A 322-amino-acid polypeptide reads, in one-letter code: Ferredoxin--NADP reductase (322 aa).

Positions 37, 45, 50, 91, 128, and 290 each coordinate FAD.

This sequence belongs to the ferredoxin--NADP reductase type 2 family. Homodimer. FAD serves as cofactor.

It catalyses the reaction 2 reduced [2Fe-2S]-[ferredoxin] + NADP(+) + H(+) = 2 oxidized [2Fe-2S]-[ferredoxin] + NADPH. The sequence is that of Ferredoxin--NADP reductase from Malacoplasma penetrans (strain HF-2) (Mycoplasma penetrans).